The sequence spans 962 residues: Translation initiation factor IF-2 (962 aa).

The tract at residues 99 to 365 (VKAAQTQAAP…GKKGKKLKLE (267 aa)) is disordered. A compositionally biased stretch (basic and acidic residues) spans 117-141 (DAAKARAEAAARAEARAKAEAEAAK). The segment covering 145–155 (AKAGNKAKPAA) has biased composition (low complexity). A compositionally biased stretch (basic and acidic residues) spans 173-216 (KPAEESKAEKAQADKMPSKKPAEPKEKAAKPKHERNGKGKDAKK). Over residues 219 to 234 (KPAAPAVPQPVVSAEE) the composition is skewed to low complexity. Positions 235-269 (QAQRDEEARRAAALRAHQEALLKEKQERQARREAM) are enriched in basic and acidic residues. A compositionally biased stretch (low complexity) spans 270–283 (KQQAEQQAKAAQEA). A compositionally biased stretch (basic and acidic residues) spans 338-354 (GGRDRNNARNGDDERVR). The 170-residue stretch at 462-631 (PRPPVVTVMG…LLEAEVLELT (170 aa)) folds into the tr-type G domain. A G1 region spans residues 471-478 (GHVDHGKT). 471–478 (GHVDHGKT) contributes to the GTP binding site. The tract at residues 496–500 (GITQH) is G2. Residues 517–520 (DTPG) form a G3 region. Residues 517 to 521 (DTPGH) and 571 to 574 (NKID) contribute to the GTP site. A G4 region spans residues 571 to 574 (NKID). A G5 region spans residues 607 to 609 (SAK).

Belongs to the TRAFAC class translation factor GTPase superfamily. Classic translation factor GTPase family. IF-2 subfamily.

It localises to the cytoplasm. One of the essential components for the initiation of protein synthesis. Protects formylmethionyl-tRNA from spontaneous hydrolysis and promotes its binding to the 30S ribosomal subunits. Also involved in the hydrolysis of GTP during the formation of the 70S ribosomal complex. This Neisseria meningitidis serogroup C (strain 053442) protein is Translation initiation factor IF-2.